Reading from the N-terminus, the 249-residue chain is Low affinity immunoglobulin gamma Fc region receptor III-A (249 aa).

Residues 1-20 form the signal peptide; it reads MWQLLLPTALVLTAFSGIQA. At 21 to 203 the chain is on the extracellular side; the sequence is GLQKAVVNLD…SPSMFPPWHQ (183 aa). 2 Ig-like C2-type domains span residues 22–102 and 119–188; these read LQKA…VQLE and EGDP…FRIS. Cystine bridges form between Cys46/Cys88 and Cys127/Cys171. N-linked (GlcNAc...) asparagine glycosylation is found at Asn62, Asn164, and Asn179. Residues 204–224 traverse the membrane as a helical segment; the sequence is ITFCLLIGLLFAIDTVLYFSV. At 225–249 the chain is on the cytoplasmic side; the sequence is RRGLQSPVADYEEPKIQWSKEPQDK. Tyr235 carries the post-translational modification Phosphotyrosine.

In terms of assembly, forms a heterooligomeric complex with ITAM-containing signaling subunits FCER1G. Interacts (via transmembrane domain) with signaling subunits; this interaction is a prerequisite for receptor complex expression on the cell surface and intracellular signal transduction. Binds the Fc region of antigen-complexed IgG. N-glycosylated. In terms of processing, phosphorylated following receptor ligation. As to expression, detected on myeloid cells, peripheral blood monocytes, splenic and bone marrow dendritic cells, and thioglycollate-elicited macrophages and neutrophils but absent from lymphoid populations with no expression observed on T cells, B cells, NK cells or other granulocytes (at protein level). Expressed in peripheral blood leukocytes, spleen, liver, thymus and small intestine. Expressed in splenic dendritic cell subsets (at protein level).

It is found in the cell membrane. In terms of biological role, receptor for the invariable Fc fragment of immunoglobulin gamma (IgG). Binds with intermediate affinity to both IgG2a and IgG2b. Can bind to IgG2a and IgG2b monomers. Does not display binding to IgG1 or IgG3. Recognizes neutralizing virus-specific IgGs displayed on the cell surface of infected cells and triggers antibody-dependent cellular cytotoxicity (ADCC). Confers protection to lethal influenza virus infection. On splenic dendritic cells, uptakes antigen immune complexes and efficiently divert them into MHC class I and II antigen presentation pathways to provide for superior priming of CD4-positive and CD8-positive T cell immune responses. Mediates neutrophil activation by IgG complexes redundantly with FCGR2A. Plays a role in promoting bone resorption by enhancing osteoclast differentiation following binding to IgG2a. Also acts as a receptor for the Fc region of immunoglobulin epsilon (IgE). Binds with low affinity to both the a and b allotypes of IgE. Has also been shown to bind to IgE allotype a only but not to allotype b. Binds aggregated IgE but not the monomeric form and bound monomeric IgG is readily displaced by IgE complexes. Binding to IgE promotes macrophage-mediated phagocytosis, antigen presentation to T cells, production of pro-inflammatory cytokines and the late phase of cutaneous allergic reactions. Mediates enhanced ADCC in response to afucosylated IgGs. This is Low affinity immunoglobulin gamma Fc region receptor III-A from Mus musculus (Mouse).